The primary structure comprises 348 residues: Nicotinate-nucleotide--dimethylbenzimidazole phosphoribosyltransferase (348 aa).

The active-site Proton acceptor is Glu-316.

Belongs to the CobT family.

The catalysed reaction is 5,6-dimethylbenzimidazole + nicotinate beta-D-ribonucleotide = alpha-ribazole 5'-phosphate + nicotinate + H(+). It functions in the pathway nucleoside biosynthesis; alpha-ribazole biosynthesis; alpha-ribazole from 5,6-dimethylbenzimidazole: step 1/2. Catalyzes the synthesis of alpha-ribazole-5'-phosphate from nicotinate mononucleotide (NAMN) and 5,6-dimethylbenzimidazole (DMB). This is Nicotinate-nucleotide--dimethylbenzimidazole phosphoribosyltransferase from Xanthomonas axonopodis pv. citri (strain 306).